Here is a 207-residue protein sequence, read N- to C-terminus: Ras-related protein Rab-8A (207 aa).

Positions 17, 18, 19, 20, 21, 22, 23, 35, 39, and 40 each coordinate GTP. Position 22 (Thr-22) interacts with Mg(2+). Short sequence motifs (switch) lie at residues 31-45 and 63-80; these read DAFN…GIDF and DTAG…YYRG. Positions 40 and 63 each coordinate Mg(2+). Gly-66 serves as a coordination point for GTP. A Phosphothreonine modification is found at Thr-72. GTP is bound by residues Asn-121, Lys-122, Asp-124, Ala-152, and Lys-153. Ser-181 and Ser-185 each carry phosphoserine. Cys-204 is subject to Cysteine methyl ester. Cys-204 is lipidated: S-geranylgeranyl cysteine. Positions 205-207 are cleaved as a propeptide — removed in mature form; that stretch reads VLL.

This sequence belongs to the small GTPase superfamily. Rab family. Interacts (GTP-bound form) with MICALL1; regulates RAB8A association with recycling endosomes. Interacts with MICALL2; competes with RAB13 and is involved in E-cadherin endocytic recycling. Interacts (GTP-bound form) with MICAL1, MICALCL, MICAL3, EHBP1 and EHBP1L1; at least in case of MICAL1, MICALCL, MICAL3 and EHBP1L1 two molecules of RAB8A can bind to one molecule of the effector protein; ternary complexes of RAB8A, RAB13 and either MICAL1 or EHBP1L1 are possible. Interacts with EHD1. Interacts with MAP4K2 and SYTL4. Interacts with SGSM1 and SGSM3. Interacts with RABIF, RIMS2, RPH3A and RPH3A. Interacts with OPTN. Interacts with RAB3IP, RAB3IP functions as guanine exchange factor (GEF). Interacts with MYO5B. Interacts with CIMAP3. Interacts with BIRC6/bruce. Interacts with OCRL. Interacts with AHI1. Interacts with DCDC1. Interacts with LRRK2; interaction facilitates phosphorylation of Thr-72. Interacts with RAB31P, GDI1, GDI2, CHM, CHML, RABGGTA, RABGGTB, TBC1D15 and INPP5B; these interactions are dependent on Thr-72 not being phosphorylated. Interacts with RILPL1 and RILPL2; these interactions are dependent on the phosphorylation of Thr-72 by LRRK2. Interacts with DZIP1; prevents inhibition by the GDP-dissociation inhibitor GDI2. Interacts (in GDP-bound form) with RAB3IP/Rabin8, RAB3IP functions as guanine exchange factor (GEF) towards RAB8A. Interacts (in GDP-bound form) with RPGR, RPGR functions as GEF towards RAB8A. Mg(2+) is required as a cofactor. Phosphorylation of Thr-72 in the switch II region by LRRK2 prevents the association of RAB regulatory proteins, including CHM, CHML and RAB GDP dissociation inhibitors GDI1 and GDI2. Phosphorylation by LRRK2 is required for localization to stressed lysosomes.

The protein localises to the cell membrane. It is found in the golgi apparatus. The protein resides in the endosome membrane. Its subcellular location is the recycling endosome membrane. It localises to the cell projection. The protein localises to the cilium. It is found in the cytoplasmic vesicle. The protein resides in the phagosome membrane. Its subcellular location is the cytoplasm. It localises to the cytoskeleton. The protein localises to the microtubule organizing center. It is found in the centrosome. The protein resides in the centriole. Its subcellular location is the cilium basal body. It localises to the midbody. The protein localises to the lysosome. It catalyses the reaction GTP + H2O = GDP + phosphate + H(+). Its activity is regulated as follows. Regulated by guanine nucleotide exchange factors (GEFs) such as RAB3IP/Rabin8 and RPGR which promote the exchange of bound GDP for free GTP, GTPase activating proteins (GAPs) which increase the GTP hydrolysis activity, and GDP dissociation inhibitors (GDIs) which inhibit the dissociation of the nucleotide from the GTPase. Activated in response to insulin. In terms of biological role, the small GTPases Rab are key regulators of intracellular membrane trafficking, from the formation of transport vesicles to their fusion with membranes. Rabs cycle between an inactive GDP-bound form and an active GTP-bound form that is able to recruit to membranes different sets of downstream effectors directly responsible for vesicle formation, movement, tethering and fusion. RAB8A is involved in polarized vesicular trafficking and neurotransmitter release. Together with RAB11A, RAB3IP, the exocyst complex, PARD3, PRKCI, ANXA2, CDC42 and DNMBP promotes transcytosis of PODXL to the apical membrane initiation sites (AMIS), apical surface formation and lumenogenesis. Regulates the compacted morphology of the Golgi. Together with MYO5B and RAB11A participates in epithelial cell polarization. Also involved in membrane trafficking to the cilium and ciliogenesis. Together with MICALL2, may also regulate adherens junction assembly. May play a role in insulin-induced transport to the plasma membrane of the glucose transporter GLUT4 and therefore play a role in glucose homeostasis. Involved in autophagy. Participates in the export of a subset of neosynthesized proteins through a Rab8-Rab10-Rab11-dependent endososomal export route. Targeted to and stabilized on stressed lysosomes through LRRK2 phosphorylation. Suppresses stress-induced lysosomal enlargement through EHBP1 and EHNP1L1 effector proteins. In Bos taurus (Bovine), this protein is Ras-related protein Rab-8A (RAB8A).